Consider the following 168-residue polypeptide: Peptide deformylase (168 aa).

Positions 92 and 134 each coordinate Fe cation. Glu135 is an active-site residue. His138 is a Fe cation binding site.

Belongs to the polypeptide deformylase family. The cofactor is Fe(2+).

The catalysed reaction is N-terminal N-formyl-L-methionyl-[peptide] + H2O = N-terminal L-methionyl-[peptide] + formate. In terms of biological role, removes the formyl group from the N-terminal Met of newly synthesized proteins. Requires at least a dipeptide for an efficient rate of reaction. N-terminal L-methionine is a prerequisite for activity but the enzyme has broad specificity at other positions. The polypeptide is Peptide deformylase (Pseudomonas aeruginosa (strain ATCC 15692 / DSM 22644 / CIP 104116 / JCM 14847 / LMG 12228 / 1C / PRS 101 / PAO1)).